A 581-amino-acid chain; its full sequence is MAPSTPLLTVRGSEGLYMVNGPPHFTESTVLPRESGRNCKVYTFSKDGTLFAWSNGEKVNIINVANKGLLHSFDLPKAVCLEFSPNNTVLATWQPYTTSKDGTAGTPNLQLYDMKTGACLKSFIQKKMQNWCPSWSDDEIICARNVNNEVHFFENNNFNTIANKLHLQKVNDFNLSPGTQPYKVAVYVPGSKGAPSFVRLYQYPNFAGPQAALANKSFFKADKVTMLWNKKATAVLVIASTEVDKTGASYYGEQTLHYIATNGESAVVQLPKNGPIYDVVWNSSSTEFCAVYGFMPAKATVFNLKCDPVFDFGTGPRNAAFYSPHGHILVLAGFGNLRGQMEVWDVKNYKLISKPVASDSTYFAWCPDGEHILTATCAPRLRVNNGYKIWHYTGSLLHKYDVPSNGELWQVSWQPFLDGIFPAKTIKYQAVPSEVPSEEPKVATAYRPPALRNKPVTNSKLHEEEPPQNMKPHPGSDKPLSKTALKNQRKHEAKKAAKQEARSDAAPTPVPQSAPRNTVTQSASGDPEVDKKIKNLKKKLKAIEQLKEQAAAGKQLEKNQLEKIQKETALLQELEDLELGV.

Met1 bears the N-acetylmethionine mark. Position 2 is an N-acetylalanine; in Eukaryotic translation initiation factor 2A, N-terminally processed (Ala2). Phosphothreonine is present on Thr5. 3 WD repeats span residues Pro23–Asn63, Gln125–Asn163, and Val356–Asp401. The interval Pro432–Ile533 is disordered. Positions Lys494 to Ser503 are enriched in basic and acidic residues. 3 positions are modified to phosphoserine: Ser503, Ser513, and Ser522. The span at Ala514–Ser524 shows a compositional bias: polar residues. A coiled-coil region spans residues Pro527–Glu578.

It belongs to the WD repeat EIF2A family.

Its function is as follows. Functions in the early steps of protein synthesis of a small number of specific mRNAs. Acts by directing the binding of methionyl-tRNAi to 40S ribosomal subunits. In contrast to the eIF-2 complex, it binds methionyl-tRNAi to 40S subunits in a codon-dependent manner, whereas the eIF-2 complex binds methionyl-tRNAi to 40S subunits in a GTP-dependent manner. In Mus musculus (Mouse), this protein is Eukaryotic translation initiation factor 2A (Eif2a).